The primary structure comprises 174 residues: Sarcoplasmic calcium-binding protein (174 aa).

Ser-1 bears the N-acetylserine mark. EF-hand domains lie at 3 to 38, 55 to 90, 91 to 126, and 125 to 160; these read LWVQKMKTYFNRIDFDKDGAITRKDFESMATRFAKE, GVWDKFLANVAGGKGIDQATFISSMKEKVKDPNAKA, VVEGPLPLFFRAVDTNEDNMISRDEYGIFFNMLGLN, and LNPDMAPASFDAIDTNNDGLLSQEEFVTAGSDFFIN. Asp-16, Asp-18, Asp-20, and Asp-27 together coordinate Ca(2+). Ca(2+) is bound by residues Asp-104, Asn-106, Asp-108, Met-110, Glu-115, Asp-138, Asn-140, Asp-142, and Glu-149.

Its function is as follows. Like parvalbumins, SCPs seem to be more abundant in fast contracting muscles, but no functional relationship can be established from this distribution. The polypeptide is Sarcoplasmic calcium-binding protein (Perinereis vancaurica tetradentata (Sandworm)).